Here is a 175-residue protein sequence, read N- to C-terminus: Putative FAS1 domain-containing protein 081L (175 aa).

Positions 28–172 (GPIVPSVWTI…GLVHIVDQFP (145 aa)) constitute an FAS1 domain.

The polypeptide is Putative FAS1 domain-containing protein 081L (Invertebrate iridescent virus 3 (IIV-3)).